The following is a 644-amino-acid chain: Core protein VP4 (644 aa).

The protein belongs to the orbivirus VP4 family.

The protein resides in the virion. The VP4 protein is one of the five proteins (with VP1, VP3, VP6 and VP7) which form the inner capsid of the virus. The sequence is that of Core protein VP4 (Segment-4) from Antilocapra americana (Pronghorn).